The sequence spans 130 residues: Small ribosomal subunit protein uS8 (130 aa).

The protein belongs to the universal ribosomal protein uS8 family. In terms of assembly, part of the 30S ribosomal subunit. Contacts proteins S5 and S12.

In terms of biological role, one of the primary rRNA binding proteins, it binds directly to 16S rRNA central domain where it helps coordinate assembly of the platform of the 30S subunit. The chain is Small ribosomal subunit protein uS8 from Ectopseudomonas mendocina (strain ymp) (Pseudomonas mendocina).